A 556-amino-acid chain; its full sequence is Glucose-6-phosphate isomerase (556 aa).

The active-site Proton donor is Glu360. Active-site residues include His391 and Lys519.

The protein belongs to the GPI family.

It localises to the cytoplasm. It carries out the reaction alpha-D-glucose 6-phosphate = beta-D-fructose 6-phosphate. It participates in carbohydrate biosynthesis; gluconeogenesis. The protein operates within carbohydrate degradation; glycolysis; D-glyceraldehyde 3-phosphate and glycerone phosphate from D-glucose: step 2/4. Its function is as follows. Catalyzes the reversible isomerization of glucose-6-phosphate to fructose-6-phosphate. This is Glucose-6-phosphate isomerase from Acinetobacter baumannii (strain SDF).